A 425-amino-acid polypeptide reads, in one-letter code: Phosphomethylpyrimidine synthase (425 aa).

Residues methionine 94, tyrosine 123, histidine 162, 184-186 (SRG), 225-228 (NGMR), and glutamate 264 contribute to the substrate site. Zn(2+) is bound at residue histidine 268. Tyrosine 291 lines the substrate pocket. Residue histidine 332 coordinates Zn(2+). 3 residues coordinate [4Fe-4S] cluster: cysteine 407, cysteine 410, and cysteine 414.

The protein belongs to the ThiC family. It depends on [4Fe-4S] cluster as a cofactor.

It catalyses the reaction 5-amino-1-(5-phospho-beta-D-ribosyl)imidazole + S-adenosyl-L-methionine = 4-amino-2-methyl-5-(phosphooxymethyl)pyrimidine + CO + 5'-deoxyadenosine + formate + L-methionine + 3 H(+). It participates in cofactor biosynthesis; thiamine diphosphate biosynthesis. In terms of biological role, catalyzes the synthesis of the hydroxymethylpyrimidine phosphate (HMP-P) moiety of thiamine from aminoimidazole ribotide (AIR) in a radical S-adenosyl-L-methionine (SAM)-dependent reaction. This is Phosphomethylpyrimidine synthase from Methanoregula boonei (strain DSM 21154 / JCM 14090 / 6A8).